The following is a 266-amino-acid chain: Glutamate racemase (266 aa).

Substrate contacts are provided by residues 9 to 10 (DS) and 41 to 42 (YG). Cys72 functions as the Proton donor/acceptor in the catalytic mechanism. 73–74 (NT) contributes to the substrate binding site. Catalysis depends on Cys184, which acts as the Proton donor/acceptor. Residue 185-186 (TH) coordinates substrate.

Belongs to the aspartate/glutamate racemases family.

It catalyses the reaction L-glutamate = D-glutamate. It functions in the pathway cell wall biogenesis; peptidoglycan biosynthesis. Its function is as follows. Provides the (R)-glutamate required for cell wall biosynthesis. The sequence is that of Glutamate racemase from Staphylococcus aureus (strain bovine RF122 / ET3-1).